A 333-amino-acid polypeptide reads, in one-letter code: tRNA N6-adenosine threonylcarbamoyltransferase (333 aa).

Residues histidine 111 and histidine 115 each coordinate Fe cation. Substrate contacts are provided by residues 134–138 (LVSGG), aspartate 167, glycine 180, and asparagine 272. Aspartate 300 provides a ligand contact to Fe cation.

This sequence belongs to the KAE1 / TsaD family. Fe(2+) serves as cofactor.

It localises to the cytoplasm. The catalysed reaction is L-threonylcarbamoyladenylate + adenosine(37) in tRNA = N(6)-L-threonylcarbamoyladenosine(37) in tRNA + AMP + H(+). Functionally, required for the formation of a threonylcarbamoyl group on adenosine at position 37 (t(6)A37) in tRNAs that read codons beginning with adenine. Is involved in the transfer of the threonylcarbamoyl moiety of threonylcarbamoyl-AMP (TC-AMP) to the N6 group of A37, together with TsaE and TsaB. TsaD likely plays a direct catalytic role in this reaction. In Legionella pneumophila (strain Paris), this protein is tRNA N6-adenosine threonylcarbamoyltransferase.